The following is a 364-amino-acid chain: Lipoyl synthase, mitochondrial (364 aa).

The interval 34–53 (PNFQDFIQNSDNSKDDFENY) is disordered. Positions 99, 104, 110, 130, 134, 137, and 345 each coordinate [4Fe-4S] cluster. The Radical SAM core domain occupies 115 to 334 (EHGTQTATIM…EQRGNELGFL (220 aa)).

Belongs to the radical SAM superfamily. Lipoyl synthase family. [4Fe-4S] cluster is required as a cofactor.

Its subcellular location is the mitochondrion. The enzyme catalyses [[Fe-S] cluster scaffold protein carrying a second [4Fe-4S](2+) cluster] + N(6)-octanoyl-L-lysyl-[protein] + 2 oxidized [2Fe-2S]-[ferredoxin] + 2 S-adenosyl-L-methionine + 4 H(+) = [[Fe-S] cluster scaffold protein] + N(6)-[(R)-dihydrolipoyl]-L-lysyl-[protein] + 4 Fe(3+) + 2 hydrogen sulfide + 2 5'-deoxyadenosine + 2 L-methionine + 2 reduced [2Fe-2S]-[ferredoxin]. Its pathway is protein modification; protein lipoylation via endogenous pathway; protein N(6)-(lipoyl)lysine from octanoyl-[acyl-carrier-protein]: step 2/2. Its function is as follows. Catalyzes the radical-mediated insertion of two sulfur atoms into the C-6 and C-8 positions of the octanoyl moiety bound to the lipoyl domains of lipoate-dependent enzymes, thereby converting the octanoylated domains into lipoylated derivatives. The chain is Lipoyl synthase, mitochondrial from Drosophila grimshawi (Hawaiian fruit fly).